The sequence spans 325 residues: Gamma-hemolysin component B (325 aa).

The N-terminal stretch at 1–26 is a signal peptide; sequence MKMNKLVKSSVATSMALLLLSGTANA.

Belongs to the aerolysin family. As to quaternary structure, toxicity requires sequential binding and synergistic association of a class S and a class F component which form heterooligomeric complexes. HlgB (class F) associates with either hlgA thus forming an AB toxin or with hlgC thus forming a CB toxin. Interacts with host AMFR.

Its subcellular location is the secreted. Functionally, toxin that seems to act by forming pores in the membrane of the cell. Has a hemolytic and a leucotoxic activity. Promotes host AMFR-mediated inflammation by mediating 'Lys-27'-linked ubiquitination of TAB3, TAK1-TAB3 complex formation and phosphorylation of TAK1/MAP3K7. In turn, activates host NF-kappa-B signaling pathway. This Staphylococcus aureus (strain NCTC 8325 / PS 47) protein is Gamma-hemolysin component B (hlgB).